Consider the following 284-residue polypeptide: MASSWNNPAIFLAAALAVATAAQVVTAGFTTDLYWQQQPAPGAVTPYKTSDWHDGSATFYGDPSGMGDDFGGACGYVSNDIVSLYSTKTAALSTPLFADGNGCGQCYELRCVKSPWCNPGSPSVVITGTNLCPPNWYLPNDDGGWCNPPRHHFDMAPPSFLKLAQRVAGIVPVQYRRVPCQRTGGVRFCLQGNHYWLLLYVMNVGGAGDVSSLSVKTSGGGGAWIQAAHNWGITYQVFAALDNSDGLTVKLTTYSTPQQTIIVSDAISPWWITGLCYQGSNNFY.

The signal sequence occupies residues 1-21 (MASSWNNPAIFLAAALAVATA). Residues 71–185 (GGACGYVSND…RRVPCQRTGG (115 aa)) form the Expansin-like EG45 domain. One can recognise an Expansin-like CBD domain in the interval 195–279 (YWLLLYVMNV…WWITGLCYQG (85 aa)).

The protein belongs to the expansin family. Expansin A subfamily. In terms of tissue distribution, expressed in roots.

The protein resides in the secreted. It is found in the cell wall. It localises to the membrane. Its function is as follows. May cause loosening and extension of plant cell walls by disrupting non-covalent bonding between cellulose microfibrils and matrix glucans. No enzymatic activity has been found. May be required for rapid internodal elongation in deepwater rice during submergence. The polypeptide is Expansin-A17 (EXPA17) (Oryza sativa subsp. japonica (Rice)).